Reading from the N-terminus, the 224-residue chain is N-(5'-phosphoribosyl)anthranilate isomerase (224 aa).

This sequence belongs to the TrpF family.

The catalysed reaction is N-(5-phospho-beta-D-ribosyl)anthranilate = 1-(2-carboxyphenylamino)-1-deoxy-D-ribulose 5-phosphate. It functions in the pathway amino-acid biosynthesis; L-tryptophan biosynthesis; L-tryptophan from chorismate: step 3/5. This is N-(5'-phosphoribosyl)anthranilate isomerase from Sinorhizobium fredii (strain NBRC 101917 / NGR234).